Consider the following 354-residue polypeptide: UDP-N-acetylglucosamine--N-acetylmuramyl-(pentapeptide) pyrophosphoryl-undecaprenol N-acetylglucosamine transferase (354 aa).

UDP-N-acetyl-alpha-D-glucosamine is bound by residues 14 to 16, Asn-126, Arg-162, Ser-190, Ile-243, 262 to 267, and Gln-287; these read TGG and ALTVSE.

Belongs to the glycosyltransferase 28 family. MurG subfamily.

Its subcellular location is the cell inner membrane. It carries out the reaction di-trans,octa-cis-undecaprenyl diphospho-N-acetyl-alpha-D-muramoyl-L-alanyl-D-glutamyl-meso-2,6-diaminopimeloyl-D-alanyl-D-alanine + UDP-N-acetyl-alpha-D-glucosamine = di-trans,octa-cis-undecaprenyl diphospho-[N-acetyl-alpha-D-glucosaminyl-(1-&gt;4)]-N-acetyl-alpha-D-muramoyl-L-alanyl-D-glutamyl-meso-2,6-diaminopimeloyl-D-alanyl-D-alanine + UDP + H(+). Its pathway is cell wall biogenesis; peptidoglycan biosynthesis. In terms of biological role, cell wall formation. Catalyzes the transfer of a GlcNAc subunit on undecaprenyl-pyrophosphoryl-MurNAc-pentapeptide (lipid intermediate I) to form undecaprenyl-pyrophosphoryl-MurNAc-(pentapeptide)GlcNAc (lipid intermediate II). The sequence is that of UDP-N-acetylglucosamine--N-acetylmuramyl-(pentapeptide) pyrophosphoryl-undecaprenol N-acetylglucosamine transferase from Photobacterium profundum (strain SS9).